Here is a 596-residue protein sequence, read N- to C-terminus: Tripeptidyl-peptidase SED2 (596 aa).

Residues 1–16 (MLVLKFVCLLASVAAA) form the signal peptide. A propeptide spans 18–203 (PTSWSSHKVV…LEAMSEEEFS (186 aa)) (removed in mature form). A Peptidase S53 domain is found at 210 to 596 (LVTTACLREL…NFQALTKVLP (387 aa)). A glycan (N-linked (GlcNAc...) asparagine) is linked at Asn265. Residues Glu286 and Asp290 each act as charge relay system in the active site. An N-linked (GlcNAc...) asparagine glycan is attached at Asn403. The active-site Charge relay system is the Ser501. Positions 543 and 544 each coordinate Ca(2+). The N-linked (GlcNAc...) asparagine glycan is linked to Asn572. 2 residues coordinate Ca(2+): Gly576 and Asp578.

It depends on Ca(2+) as a cofactor.

Its subcellular location is the secreted. The protein localises to the extracellular space. The enzyme catalyses Release of an N-terminal tripeptide from a polypeptide.. In terms of biological role, secreted tripeptidyl-peptidase which degrades proteins at acidic pHs and is involved in virulence. This chain is Tripeptidyl-peptidase SED2 (SED2), found in Arthroderma otae (strain ATCC MYA-4605 / CBS 113480) (Microsporum canis).